Reading from the N-terminus, the 314-residue chain is Adenosine receptor A3 (314 aa).

Topologically, residues 1–14 are extracellular; sequence MAVNGTALLLANVT. N-linked (GlcNAc...) asparagine glycans are attached at residues Asn-4 and Asn-12. The chain crosses the membrane as a helical span at residues 15–37; it reads YITVEILIGLCAIVGNVLVIWVV. At 38 to 48 the chain is on the cytoplasmic side; sequence KLNPSLQTTTF. A helical transmembrane segment spans residues 49–72; it reads YFIVSLALADIAVGVLVMPLAIVI. Topologically, residues 73–84 are extracellular; it reads SLGITIQFYNCL. The cysteines at positions 83 and 166 are disulfide-linked. Residues 85-106 form a helical membrane-spanning segment; sequence FMTCLLLIFTHASIMSLLAIAV. Residues 107 to 126 lie on the Cytoplasmic side of the membrane; it reads DRYLRVKLTVRYRRVTTQRR. Residues 127–148 form a helical membrane-spanning segment; sequence IWLALGLCWLVSFLVGLTPMFG. Residues 149–177 lie on the Extracellular side of the membrane; the sequence is WNMKLTSEHQRNVTFLSCQFSSVMRMDYM. N-linked (GlcNAc...) asparagine glycosylation is present at Asn-160. Residues 178-198 traverse the membrane as a helical segment; it reads VYFSFFTWILIPLVVMCAIYL. Topologically, residues 199–231 are cytoplasmic; the sequence is DIFYVIRNKLNQNFSSSKETGAFYGREFKTAKS. A helical transmembrane segment spans residues 232-255; that stretch reads LFLVLFLFAFSWLPLSIINCITYF. Residues 256–261 lie on the Extracellular side of the membrane; sequence HGEVPQ. Residues 262 to 284 form a helical membrane-spanning segment; it reads IILYLGILLSHANSMMNPIVYAY. The Cytoplasmic portion of the chain corresponds to 285–314; that stretch reads KIKKFKETYLLIFKTYMICQSSDSLDSSTE. Cys-303 is lipidated: S-palmitoyl cysteine.

Belongs to the G-protein coupled receptor 1 family.

Its subcellular location is the cell membrane. Its function is as follows. Receptor for adenosine. The activity of this receptor is mediated by G proteins which inhibits adenylyl cyclase. The sequence is that of Adenosine receptor A3 (ADORA3) from Canis lupus familiaris (Dog).